The chain runs to 386 residues: 8-amino-7-oxononanoate synthase (386 aa).

Arg-26 contributes to the substrate binding site. Pyridoxal 5'-phosphate is bound at residue 104 to 105 (GY). His-129 provides a ligand contact to substrate. Pyridoxal 5'-phosphate contacts are provided by Ser-176, His-204, and Thr-232. Lys-235 carries the post-translational modification N6-(pyridoxal phosphate)lysine. Thr-349 is a substrate binding site.

It belongs to the class-II pyridoxal-phosphate-dependent aminotransferase family. BioF subfamily. Homodimer. The cofactor is pyridoxal 5'-phosphate.

The catalysed reaction is 6-carboxyhexanoyl-[ACP] + L-alanine + H(+) = (8S)-8-amino-7-oxononanoate + holo-[ACP] + CO2. The protein operates within cofactor biosynthesis; biotin biosynthesis. Catalyzes the decarboxylative condensation of pimeloyl-[acyl-carrier protein] and L-alanine to produce 8-amino-7-oxononanoate (AON), [acyl-carrier protein], and carbon dioxide. This Chromohalobacter salexigens (strain ATCC BAA-138 / DSM 3043 / CIP 106854 / NCIMB 13768 / 1H11) protein is 8-amino-7-oxononanoate synthase.